The primary structure comprises 197 residues: Adenylate kinase (197 aa).

Residue 16-21 (GAGKGT) coordinates ATP. An NMP region spans residues 36-65 (STGDILRDHVARGTALGQQAGPLMEAGQLV). AMP contacts are provided by residues Thr37, Arg42, 63-65 (QLV), 90-93 (GFPR), and Gln97. The interval 131–147 (DRGRQAVAEGRAPRADD) is LID. ATP is bound at residue Arg132. The disordered stretch occupies residues 137–158 (VAEGRAPRADDNEETARKRQQV). A compositionally biased stretch (basic and acidic residues) spans 141 to 153 (RAPRADDNEETAR). The AMP site is built by Arg144 and Arg155. Residue Gly183 coordinates ATP.

This sequence belongs to the adenylate kinase family. In terms of assembly, monomer.

It is found in the cytoplasm. The enzyme catalyses AMP + ATP = 2 ADP. Its pathway is purine metabolism; AMP biosynthesis via salvage pathway; AMP from ADP: step 1/1. Its function is as follows. Catalyzes the reversible transfer of the terminal phosphate group between ATP and AMP. Plays an important role in cellular energy homeostasis and in adenine nucleotide metabolism. The protein is Adenylate kinase of Deinococcus radiodurans (strain ATCC 13939 / DSM 20539 / JCM 16871 / CCUG 27074 / LMG 4051 / NBRC 15346 / NCIMB 9279 / VKM B-1422 / R1).